The primary structure comprises 404 residues: Cysteine desulfurase IscS (404 aa).

Pyridoxal 5'-phosphate contacts are provided by residues 73–74 (AT), Asn-153, Gln-181, and 201–203 (SAH). N6-(pyridoxal phosphate)lysine is present on Lys-204. Thr-241 is a pyridoxal 5'-phosphate binding site. Cys-327 acts as the Cysteine persulfide intermediate in catalysis. Cys-327 is a [2Fe-2S] cluster binding site.

It belongs to the class-V pyridoxal-phosphate-dependent aminotransferase family. NifS/IscS subfamily. As to quaternary structure, homodimer. Forms a heterotetramer with IscU, interacts with other sulfur acceptors. The cofactor is pyridoxal 5'-phosphate.

The protein resides in the cytoplasm. The catalysed reaction is (sulfur carrier)-H + L-cysteine = (sulfur carrier)-SH + L-alanine. It functions in the pathway cofactor biosynthesis; iron-sulfur cluster biosynthesis. In terms of biological role, master enzyme that delivers sulfur to a number of partners involved in Fe-S cluster assembly, tRNA modification or cofactor biosynthesis. Catalyzes the removal of elemental sulfur atoms from cysteine to produce alanine. Functions as a sulfur delivery protein for Fe-S cluster synthesis onto IscU, an Fe-S scaffold assembly protein, as well as other S acceptor proteins. The protein is Cysteine desulfurase IscS of Anaeromyxobacter sp. (strain K).